The primary structure comprises 132 residues: L-ectoine synthase (132 aa).

This sequence belongs to the ectoine synthase family.

The enzyme catalyses (2S)-4-acetamido-2-aminobutanoate = L-ectoine + H2O. The protein operates within amine and polyamine biosynthesis; ectoine biosynthesis; L-ectoine from L-aspartate 4-semialdehyde: step 3/3. In terms of biological role, catalyzes the circularization of gamma-N-acetyl-alpha,gamma-diaminobutyric acid (ADABA) to ectoine (1,4,5,6-tetrahydro-2-methyl-4-pyrimidine carboxylic acid), which is an excellent osmoprotectant. In Saccharophagus degradans (strain 2-40 / ATCC 43961 / DSM 17024), this protein is L-ectoine synthase.